Reading from the N-terminus, the 344-residue chain is L-rhamnose-proton symporter (344 aa).

Transmembrane regions (helical) follow at residues Ala4–Ala24, Trp38–Leu58, Leu74–Met94, Met101–Ile121, Thr137–Leu157, Leu175–Ala195, Leu214–Ile234, Val259–Gly279, Ile290–Leu310, and Val323–Ala343.

It belongs to the L-rhamnose transporter (TC 2.A.7.6) family.

The protein resides in the cell inner membrane. It carries out the reaction L-rhamnopyranose(in) + H(+)(in) = L-rhamnopyranose(out) + H(+)(out). Its function is as follows. Uptake of L-rhamnose across the cytoplasmic membrane with the concomitant transport of protons into the cell (symport system). The protein is L-rhamnose-proton symporter of Escherichia coli (strain K12 / MC4100 / BW2952).